Reading from the N-terminus, the 223-residue chain is Deoxyribose-phosphate aldolase (223 aa).

The Proton donor/acceptor role is filled by aspartate 91. The active-site Schiff-base intermediate with acetaldehyde is lysine 153. Lysine 182 (proton donor/acceptor) is an active-site residue.

Belongs to the DeoC/FbaB aldolase family. DeoC type 1 subfamily.

The protein localises to the cytoplasm. It carries out the reaction 2-deoxy-D-ribose 5-phosphate = D-glyceraldehyde 3-phosphate + acetaldehyde. It functions in the pathway carbohydrate degradation; 2-deoxy-D-ribose 1-phosphate degradation; D-glyceraldehyde 3-phosphate and acetaldehyde from 2-deoxy-alpha-D-ribose 1-phosphate: step 2/2. In terms of biological role, catalyzes a reversible aldol reaction between acetaldehyde and D-glyceraldehyde 3-phosphate to generate 2-deoxy-D-ribose 5-phosphate. The protein is Deoxyribose-phosphate aldolase of Yersinia enterocolitica serotype O:8 / biotype 1B (strain NCTC 13174 / 8081).